We begin with the raw amino-acid sequence, 769 residues long: Bifunctional glycosyltransferase pgtA (769 aa).

Residues 25–210 (YQGINNLIIS…SVIFKRSIFT (186 aa)) form an N-acetylgalactosamine 3-beta-galactosyltransferase region. Over residues 410–441 (NNINNNNNNNNNNNNNNNNNNNNNNNNNNNNN) the composition is skewed to low complexity. Residues 410 to 442 (NNINNNNNNNNNNNNNNNNNNNNNNNNNNNNNS) are disordered. The interval 442-769 (SILNFISGIN…SVHIGELFIS (328 aa)) is alpha-1,2-fucosyltransferase.

This sequence belongs to the glycosyltransferase 2 family.

It catalyses the reaction an N-acetyl-beta-D-glucosaminyl derivative + UDP-alpha-D-galactose = a beta-D-galactosyl-(1-&gt;3)-N-acetyl-beta-D-glucosaminyl derivative + UDP + H(+). It carries out the reaction a beta-D-galactosyl-(1-&gt;3)-N-acetyl-beta-D-glucosaminyl derivative + GDP-beta-L-fucose = an alpha-L-Fuc-(1-&gt;2)-beta-D-Gal-(1-&gt;3)-beta-D-GlcNAc derivative + GDP + H(+). Bifunctional protein composed of 2 glycosyltransferase domains involved in glycosylating skp1. The N-terminal part catalyzes the transfer of a galactose residue to GlcNAc-skp1 in a beta 1-3 linkage. The C-terminal part catalyzes the transfer of a fucose residue to Gal-GlcNAc-skp1 in an alpha 1-2 linkage. The sequence is that of Bifunctional glycosyltransferase pgtA (pgtA) from Dictyostelium discoideum (Social amoeba).